We begin with the raw amino-acid sequence, 141 residues long: Hemoglobin subunit alpha-1 (141 aa).

Residues 1-141 form the Globin domain; that stretch reads VLTDAEKKEV…VATVLTSKYR (141 aa). Residue His-58 participates in O2 binding. Heme b is bound at residue His-87.

This sequence belongs to the globin family. In terms of assembly, heterotetramer of two alpha chains and two beta chains. As to expression, red blood cells.

Functionally, involved in oxygen transport from the lung to the various peripheral tissues. This is Hemoglobin subunit alpha-1 from Tachyglossus aculeatus aculeatus (Southeast Australian short-beaked echidna).